A 429-amino-acid chain; its full sequence is Putative protease Do-like 14 (429 aa).

Residues 87–113 (KSEAPINDEKGVSVEASDSSSKPSNGY) form a disordered region. Residues 113–338 (YLGRDTIANA…IRPWIGLKMV (226 aa)) form a serine protease region. Residues histidine 165, aspartate 203, and serine 281 each act as charge relay system in the active site. The region spanning 318 to 424 (IIEHFKKSGR…RVTLEVIPEE (107 aa)) is the PDZ domain.

It belongs to the peptidase S1C family.

Putative serine protease. This is Putative protease Do-like 14 (DEGP14) from Arabidopsis thaliana (Mouse-ear cress).